Consider the following 942-residue polypeptide: Leucine--tRNA ligase (942 aa).

Positions 41–51 match the 'HIGH' region motif; the sequence is PYLNGVLHAGH. The 'KMSKS' region motif lies at 633–637; that stretch reads KLSKS. K636 serves as a coordination point for ATP.

The protein belongs to the class-I aminoacyl-tRNA synthetase family.

It localises to the cytoplasm. It catalyses the reaction tRNA(Leu) + L-leucine + ATP = L-leucyl-tRNA(Leu) + AMP + diphosphate. The chain is Leucine--tRNA ligase from Methanocaldococcus jannaschii (strain ATCC 43067 / DSM 2661 / JAL-1 / JCM 10045 / NBRC 100440) (Methanococcus jannaschii).